The sequence spans 546 residues: Chaperonin GroEL (546 aa).

ATP contacts are provided by residues 30 to 33 (TLGP), Lys-51, 87 to 91 (DGTTT), Gly-415, 479 to 481 (NAA), and Asp-495. The segment at 526–546 (KEEKPDLSGAGAGMGGMGGMM) is disordered. Over residues 535–546 (AGAGMGGMGGMM) the composition is skewed to gly residues.

Belongs to the chaperonin (HSP60) family. In terms of assembly, forms a cylinder of 14 subunits composed of two heptameric rings stacked back-to-back. Interacts with the co-chaperonin GroES.

The protein localises to the cytoplasm. It catalyses the reaction ATP + H2O + a folded polypeptide = ADP + phosphate + an unfolded polypeptide.. Functionally, together with its co-chaperonin GroES, plays an essential role in assisting protein folding. The GroEL-GroES system forms a nano-cage that allows encapsulation of the non-native substrate proteins and provides a physical environment optimized to promote and accelerate protein folding. This Wigglesworthia glossinidia brevipalpis protein is Chaperonin GroEL.